Reading from the N-terminus, the 332-residue chain is Arabinogalactan endo-beta-1,4-galactanase (332 aa).

An N-linked (GlcNAc...) asparagine glycan is attached at Asn-111. Residue Glu-135 is the Proton donor of the active site. Residue Glu-245 is the Nucleophile of the active site.

Belongs to the glycosyl hydrolase 53 family.

The enzyme catalyses The enzyme specifically hydrolyzes (1-&gt;4)-beta-D-galactosidic linkages in type I arabinogalactans.. This Humicola insolens (Soft-rot fungus) protein is Arabinogalactan endo-beta-1,4-galactanase.